The following is a 241-amino-acid chain: Probable xyloglucan-specific endo-beta-1,4-glucanase A (241 aa).

A signal peptide spans 1-18 (MKFNLALALSLTVATAEA).

The protein belongs to the glycosyl hydrolase 12 (cellulase H) family.

Its subcellular location is the secreted. It carries out the reaction xyloglucan + H2O = xyloglucan oligosaccharides.. Its function is as follows. Catalyzes endohydrolysis of 1,4-beta-D-glucosidic linkages in xyloglucan with retention of the beta-configuration of the glycosyl residues. Specific for xyloglucan and does not hydrolyze other cell wall components. This Aspergillus clavatus (strain ATCC 1007 / CBS 513.65 / DSM 816 / NCTC 3887 / NRRL 1 / QM 1276 / 107) protein is Probable xyloglucan-specific endo-beta-1,4-glucanase A (xgeA).